The chain runs to 462 residues: Cytochrome b558/566 subunit A (462 aa).

At 1 to 8 (MSLKIKSK) the chain is on the cytoplasmic side. The chain crosses the membrane as a helical span at residues 9-26 (ITIGVLLIIFLLSIIFTL). The Extracellular segment spans residues 27 to 431 (ENVSLAQTSP…TSTSPVTTIS (405 aa)). Residues Asn28, Asn65, Asn91, Asn121, Asn144, Asn164, Asn174, Asn183, Asn211, Asn278, Asn279, Asn293, Asn316, Asn339, Asn353, and Asn376 are each glycosylated (N-linked (GlcNAc...) asparagine). Residues 432-456 (SAIPPVTLYVTIIGVVVALVALVIL) form a helical membrane-spanning segment. Residues 457 to 462 (YVVFRR) are Cytoplasmic-facing.

It depends on heme as a cofactor. In terms of processing, N-glycosylated on at least seven Asn residues by identical hexasaccharide units composed of Man, GlcNAc, Glc and 6-deoxy-6-sulfoglucose residues in the molar ration of 2:2:1:1. Post-translationally, O-glycosylated on probably as many as 35 positions by single Man residues.

It localises to the cell membrane. Monoheme cytochrome whose physiological function is not yet clear. In Sulfolobus acidocaldarius (strain ATCC 33909 / DSM 639 / JCM 8929 / NBRC 15157 / NCIMB 11770), this protein is Cytochrome b558/566 subunit A (cbsA).